The following is a 73-amino-acid chain: UPF0435 protein lin1819 (73 aa).

The protein belongs to the UPF0435 family.

The polypeptide is UPF0435 protein lin1819 (Listeria innocua serovar 6a (strain ATCC BAA-680 / CLIP 11262)).